The primary structure comprises 205 residues: Lymphotoxin-alpha (205 aa).

An N-terminal signal peptide occupies residues 1-34 (MTPPERLFLPRVCGTTLHLLLLGLLLVLLPGAQG). T41 carries an O-linked (GalNAc...) threonine; partial glycan. Residues 63-205 (PAAHLIGDPS…STVFFGAFAL (143 aa)) enclose the THD domain. The N-linked (GlcNAc...) asparagine glycan is linked to N96.

The protein belongs to the tumor necrosis factor family. Homotrimer, and heterotrimer of either two LTB and one LTA subunits or (less prevalent) two LTA and one LTB subunits. Interacts with TNFRSF14.

The protein localises to the secreted. It localises to the membrane. Cytokine that in its homotrimeric form binds to TNFRSF1A/TNFR1, TNFRSF1B/TNFBR and TNFRSF14/HVEM. In its heterotrimeric form with LTB binds to TNFRSF3/LTBR. Lymphotoxin is produced by lymphocytes and is cytotoxic for a wide range of tumor cells in vitro and in vivo. The polypeptide is Lymphotoxin-alpha (LTA) (Homo sapiens (Human)).